Here is a 415-residue protein sequence, read N- to C-terminus: Diaminopimelate decarboxylase (415 aa).

Residue Lys-54 is modified to N6-(pyridoxal phosphate)lysine. Pyridoxal 5'-phosphate contacts are provided by residues Gly-223 and 264-267; that span reads EPGR. Arg-267, Arg-303, and Tyr-307 together coordinate substrate. The Proton donor role is filled by Cys-338. Substrate-binding residues include Glu-339 and Tyr-374. Tyr-374 contacts pyridoxal 5'-phosphate.

This sequence belongs to the Orn/Lys/Arg decarboxylase class-II family. LysA subfamily. As to quaternary structure, homodimer. The cofactor is pyridoxal 5'-phosphate.

The enzyme catalyses meso-2,6-diaminopimelate + H(+) = L-lysine + CO2. It participates in amino-acid biosynthesis; L-lysine biosynthesis via DAP pathway; L-lysine from DL-2,6-diaminopimelate: step 1/1. Its function is as follows. Specifically catalyzes the decarboxylation of meso-diaminopimelate (meso-DAP) to L-lysine. In Buchnera aphidicola subsp. Schizaphis graminum (strain Sg), this protein is Diaminopimelate decarboxylase.